The primary structure comprises 1096 residues: Cation-transporting ATPase 5 (1096 aa).

Residues 1–19 (MDSIELKQLVPENDSEPGT) lie on the Cytoplasmic side of the membrane. The chain crosses the membrane as a helical span at residues 20–41 (PRQLLFQHYDISNEETIGIKPF). Topologically, residues 42–47 (KSIPAK) are lumenal. Residues 48–70 (VYILRVTEILTLGLLHLILTWLP) form a helical membrane-spanning segment. Residues 71-193 (EFRLKWIEAP…LVSTKKSIVT (123 aa)) lie on the Cytoplasmic side of the membrane. The chain crosses the membrane as a helical span at residues 194-216 (ILLNEVLHPFYLFQAVSVLIWLC). Residues 217 to 220 (DSFV) are Lumenal-facing. Residues 221–238 (FYSCCIVFISSYSIFLSV) form a helical membrane-spanning segment. Residues 239–391 (KESKESENRI…NLRPSQLYLD (153 aa)) lie on the Cytoplasmic side of the membrane. Residues 392–412 (SMSFLKTMAILSFVSIVFIAI) traverse the membrane as a helical segment. The Lumenal portion of the chain corresponds to 413–425 (YLNLYNASFGHVV). The helical transmembrane segment at 426–447 (LRSLDVLTILVPPALPATLSVG) threads the bilayer. Over 448–895 (IANSIARLSR…SLILSHRCFQ (448 aa)) the chain is Cytoplasmic. Aspartate 480 serves as the catalytic 4-aspartylphosphate intermediate. Residues aspartate 838 and aspartate 842 each contribute to the Mg(2+) site. The chain crosses the membrane as a helical span at residues 896–915 (YMVLCAIVQFSGVFFLYLKN). At 916-922 (YNFNDNQ) the chain is on the lumenal side. Residues 923–940 (FLFMDLLIIFPLSAAMSY) traverse the membrane as a helical segment. The Cytoplasmic portion of the chain corresponds to 941 to 958 (FDPAQNLTSNRPNSTLFG). Residues 959–982 (KGRVKDLGIQSVLIWLSHGLLTLI) form a helical membrane-spanning segment. Residues 983–1003 (LHELNWVELPEWQLEKSNTKN) lie on the Lumenal side of the membrane. The chain crosses the membrane as a helical span at residues 1004–1026 (VLVTSIFLLSSLQYLGICIGINQ). Over 1027–1040 (SSEFLSPIWKKKTY) the chain is Cytoplasmic. Residues 1041 to 1060 (VCLCTTIGLCNIYLCFANEN) traverse the membrane as a helical segment. At 1061–1075 (HIISRCLQITRLPTL) the chain is on the lumenal side. The helical transmembrane segment at 1076–1096 (YRFIILFMGVISCCLTSILNM) threads the bilayer.

Belongs to the cation transport ATPase (P-type) (TC 3.A.3) family. Type V subfamily.

The protein resides in the endoplasmic reticulum membrane. Its subcellular location is the golgi apparatus membrane. The enzyme catalyses ATP + H2O = ADP + phosphate + H(+). Functionally, plays a role in regulating calcium and manganese homeostasis responsible for cell cycle progression. This is Cation-transporting ATPase 5 (cta5) from Schizosaccharomyces pombe (strain 972 / ATCC 24843) (Fission yeast).